A 90-amino-acid polypeptide reads, in one-letter code: DNA-binding protein HU-alpha (90 aa).

The protein belongs to the bacterial histone-like protein family. As to quaternary structure, heterodimer of an alpha and a beta chain.

In terms of biological role, histone-like DNA-binding protein which is capable of wrapping DNA to stabilize it, and thus to prevent its denaturation under extreme environmental conditions. The polypeptide is DNA-binding protein HU-alpha (hupA) (Pseudomonas aeruginosa (strain ATCC 15692 / DSM 22644 / CIP 104116 / JCM 14847 / LMG 12228 / 1C / PRS 101 / PAO1)).